The primary structure comprises 633 residues: Chaperone protein DnaK (633 aa).

At T198 the chain carries Phosphothreonine; by autocatalysis. Residues 599-633 are disordered; that stretch reads QQASQETPGDGDAGAAGAKKKDDDDVVDADYEEVK. Residues 622-633 are compositionally biased toward acidic residues; that stretch reads DDVVDADYEEVK.

This sequence belongs to the heat shock protein 70 family.

Acts as a chaperone. The protein is Chaperone protein DnaK of Desulfotalea psychrophila (strain LSv54 / DSM 12343).